Consider the following 366-residue polypeptide: tRNA/tmRNA (uracil-C(5))-methyltransferase (366 aa).

The S-adenosyl-L-methionine site is built by glutamine 190, tyrosine 218, asparagine 223, glutamate 239, and aspartate 299. Catalysis depends on cysteine 324, which acts as the Nucleophile. The Proton acceptor role is filled by glutamate 358.

Belongs to the class I-like SAM-binding methyltransferase superfamily. RNA M5U methyltransferase family. TrmA subfamily.

The catalysed reaction is uridine(54) in tRNA + S-adenosyl-L-methionine = 5-methyluridine(54) in tRNA + S-adenosyl-L-homocysteine + H(+). The enzyme catalyses uridine(341) in tmRNA + S-adenosyl-L-methionine = 5-methyluridine(341) in tmRNA + S-adenosyl-L-homocysteine + H(+). In terms of biological role, dual-specificity methyltransferase that catalyzes the formation of 5-methyluridine at position 54 (m5U54) in all tRNAs, and that of position 341 (m5U341) in tmRNA (transfer-mRNA). The polypeptide is tRNA/tmRNA (uracil-C(5))-methyltransferase (Escherichia coli O81 (strain ED1a)).